A 358-amino-acid polypeptide reads, in one-letter code: MSTAIRSGRQSNWEAFCQWVTDTNNRIYVGWFGVLMIPCLLAATICFTIAFIAAPPVDIDGIREPVAGSLIYGNNIISGAVVPSSNAIGLHFYPIWEAASLDEWLYNGGPYQLVCFHFLIGISAYMGRQWELSYRLGMRPWICVAYSAPLSAAMAVFLVYPFGQGSFSDGMPLGISGTFNFMLVFQAEHNILMHPFHMLGVAGVFGGSLFSAMHGSLVTSSLVRETTETESQNYGYKFGQEEETYNIVAAHGYFGRLIFQYASFNNSRSLHFFLGAWPVVGIWFTSMGVSTMAFNLNGFNFNQSILDGQGRVVNTWADMVNRAGLGMEVMHERNAHNFPLDLATVESTPVALQAPAIG.

3 helical membrane-spanning segments follow: residues Y28–I45, H117–L132, and W141–A155. A chlorophyll a-binding site is contributed by H117. Y125 is a binding site for pheophytin a. Positions 169 and 188 each coordinate [CaMn4O5] cluster. A helical transmembrane segment spans residues F196 to L217. Chlorophyll a is bound at residue H197. Residues H214 and S263–F264 contribute to the a quinone site. Residue H214 coordinates Fe cation. H271 serves as a coordination point for Fe cation. Residues F273–M287 form a helical membrane-spanning segment. [CaMn4O5] cluster contacts are provided by H331, E332, D341, and A343. Residues T344–G358 constitute a propeptide that is removed on maturation.

Belongs to the reaction center PufL/M/PsbA/D family. In terms of assembly, PSII is composed of 1 copy each of membrane proteins PsbA, PsbB, PsbC, PsbD, PsbE, PsbF, PsbH, PsbI, PsbJ, PsbK, PsbL, PsbM, PsbT, PsbX, PsbY, PsbZ, Psb30/Ycf12, peripheral proteins PsbO, CyanoQ (PsbQ), PsbU, PsbV and a large number of cofactors. It forms dimeric complexes. The D1/D2 heterodimer binds P680, chlorophylls that are the primary electron donor of PSII, and subsequent electron acceptors. It shares a non-heme iron and each subunit binds pheophytin, quinone, additional chlorophylls, carotenoids and lipids. D1 provides most of the ligands for the Mn4-Ca-O5 cluster of the oxygen-evolving complex (OEC). There is also a Cl(-1) ion associated with D1 and D2, which is required for oxygen evolution. The PSII complex binds additional chlorophylls, carotenoids and specific lipids. serves as cofactor. Tyr-160 forms a radical intermediate that is referred to as redox-active TyrZ, YZ or Y-Z. In terms of processing, C-terminally processed by CtpA; processing is essential to allow assembly of the oxygen-evolving complex and thus photosynthetic growth.

It is found in the cellular thylakoid membrane. It carries out the reaction 2 a plastoquinone + 4 hnu + 2 H2O = 2 a plastoquinol + O2. Its function is as follows. Photosystem II (PSII) is a light-driven water:plastoquinone oxidoreductase that uses light energy to abstract electrons from H(2)O, generating O(2) and a proton gradient subsequently used for ATP formation. It consists of a core antenna complex that captures photons, and an electron transfer chain that converts photonic excitation into a charge separation. The D1/D2 (PsbA/PsbD) reaction center heterodimer binds P680, the primary electron donor of PSII as well as several subsequent electron acceptors. The chain is Photosystem II protein D1 2 from Parasynechococcus marenigrum (strain WH8102).